A 198-amino-acid chain; its full sequence is Autophagy-related protein 33 (198 aa).

A run of 3 helical transmembrane segments spans residues 17–37 (VSLGLLTGVSYSISSLALPAL), 60–80 (PVLALTSLASAPFLISFFLAP), and 86–106 (PYLLYTAILATLSSVAPILIP). The segment at 111–147 (APRRTASSAPRKSSRAKMEASYEVLGDAHSEPASDED) is disordered. Positions 112–121 (PRRTASSAPR) are enriched in low complexity. The span at 126–142 (AKMEASYEVLGDAHSEP) shows a compositional bias: basic and acidic residues. The chain crosses the membrane as a helical span at residues 171 to 191 (TAISALGFAMAVVGIWGDGAP).

Belongs to the ATG33 family.

Its subcellular location is the mitochondrion membrane. Involved in the selective degradation of mitochondria via autophagy during starvation and at post-log phase. Autophagy is required for proper vegetative growth, asexual/sexual reproduction, and full virulence. Autophagy is particularly involved in the biosynthesis of deoxynivalenol (DON), an important virulence determinant. The protein is Autophagy-related protein 33 of Gibberella zeae (strain ATCC MYA-4620 / CBS 123657 / FGSC 9075 / NRRL 31084 / PH-1) (Wheat head blight fungus).